The sequence spans 233 residues: Transcriptional regulatory protein NatR (233 aa).

In terms of domain architecture, Response regulatory spans Lys-3–Leu-117. A 4-aspartylphosphate modification is found at Asp-54. Residues Ile-129–Phe-233 enclose the HTH LytTR-type domain.

In terms of processing, phosphorylated by NatK.

It is found in the cytoplasm. Member of the two-component regulatory system NatK/NatR that positively regulates the expression of the natAB operon. Acts by binding directly to the promoter of natAB. This chain is Transcriptional regulatory protein NatR, found in Bacillus subtilis (strain 168).